The sequence spans 248 residues: UDP-2,3-diacylglucosamine hydrolase (248 aa).

Positions 8, 10, 41, 79, and 114 each coordinate Mn(2+). 79-80 contacts substrate; sequence NR. Substrate contacts are provided by Asp-122, Ser-160, Asp-171, and His-202. Mn(2+)-binding residues include His-202 and His-204.

It belongs to the LpxH family. It depends on Mn(2+) as a cofactor.

It is found in the cell inner membrane. It catalyses the reaction UDP-2-N,3-O-bis[(3R)-3-hydroxytetradecanoyl]-alpha-D-glucosamine + H2O = 2-N,3-O-bis[(3R)-3-hydroxytetradecanoyl]-alpha-D-glucosaminyl 1-phosphate + UMP + 2 H(+). It participates in glycolipid biosynthesis; lipid IV(A) biosynthesis; lipid IV(A) from (3R)-3-hydroxytetradecanoyl-[acyl-carrier-protein] and UDP-N-acetyl-alpha-D-glucosamine: step 4/6. Its function is as follows. Hydrolyzes the pyrophosphate bond of UDP-2,3-diacylglucosamine to yield 2,3-diacylglucosamine 1-phosphate (lipid X) and UMP by catalyzing the attack of water at the alpha-P atom. Involved in the biosynthesis of lipid A, a phosphorylated glycolipid that anchors the lipopolysaccharide to the outer membrane of the cell. The chain is UDP-2,3-diacylglucosamine hydrolase from Stenotrophomonas maltophilia (strain R551-3).